A 232-amino-acid chain; its full sequence is Large ribosomal subunit protein uL1 (232 aa).

The protein belongs to the universal ribosomal protein uL1 family. Part of the 50S ribosomal subunit.

In terms of biological role, binds directly to 23S rRNA. The L1 stalk is quite mobile in the ribosome, and is involved in E site tRNA release. Functionally, protein L1 is also a translational repressor protein, it controls the translation of the L11 operon by binding to its mRNA. The chain is Large ribosomal subunit protein uL1 from Stenotrophomonas maltophilia (strain K279a).